We begin with the raw amino-acid sequence, 134 residues long: UPF0715 membrane protein YoaG (134 aa).

Helical transmembrane passes span 9–29 (LMTL…YSFV), 35–55 (IIAL…YGLF), 72–92 (VMYL…FFVI), and 106–126 (FYYM…SLIL).

This sequence belongs to the UPF0715 family.

The protein localises to the cell membrane. This Bacillus subtilis (strain 168) protein is UPF0715 membrane protein YoaG (yoaG).